The sequence spans 103 residues: Large ribosomal subunit protein bL21 (103 aa).

It belongs to the bacterial ribosomal protein bL21 family. In terms of assembly, part of the 50S ribosomal subunit. Contacts protein L20.

This protein binds to 23S rRNA in the presence of protein L20. This Chromobacterium violaceum (strain ATCC 12472 / DSM 30191 / JCM 1249 / CCUG 213 / NBRC 12614 / NCIMB 9131 / NCTC 9757 / MK) protein is Large ribosomal subunit protein bL21.